A 211-amino-acid chain; its full sequence is Porin MspA (211 aa).

Residues 1 to 27 (MKAISRVLIAMVAAIAALFTSTGTSHA) form the signal peptide.

It belongs to the mycobacterial porin (TC 1.B.24) family. Forms very stable octamers. Isolated as a 100 kDa complex that can be reduced to monomers upon boiling in 80% dimethyl sulfoxide for 15 minutes. Structures show a goblet with the wide end on the exterior of the outer membrane and a central channel. It is not known if mixed oligomers of MspA with other Msp subunits form in vivo.

It is found in the cell outer membrane. The protein localises to the secreted. The protein resides in the cell wall. In terms of biological role, the major porin in this organism, forms a water-filled channel which favors the permeation of cations, amino acids, iron Fe(3+) and less efficiently phosphate. Does not transport Fe-ExoMS, the predominant siderophore. Plays a role in transport of beta-lactamase and hydrophilic fluoroquinolone antibiotics such as norfloxacin as well as chloramphenicol. There are about 2400 porins in wild-type, 800 in an mspA deletion and 150 in a double mspA-mspC deletion. Different conductance values with maxima at 2.3 and 4.6 nanosiemens might be caused by a simultaneous reconstitution of MspA channels into the membrane or by the existence of different MspA conformations. In Mycolicibacterium smegmatis (strain ATCC 700084 / mc(2)155) (Mycobacterium smegmatis), this protein is Porin MspA (mspA).